The sequence spans 196 residues: Holliday junction branch migration complex subunit RuvA (196 aa).

Positions 1–62 (MYEYINGLIT…ENEMTLYGFI (62 aa)) are domain I. Residues 63-141 (DENEKYLFNK…DLALSAGMTV (79 aa)) are domain II. A flexible linker region spans residues 142–146 (ETVPT). The segment at 147–196 (TDNQALADALAALESLGYSAKDVAKLQTVLANQKDTTDGYIRSALKFLVK) is domain III.

This sequence belongs to the RuvA family. In terms of assembly, homotetramer. Forms an RuvA(8)-RuvB(12)-Holliday junction (HJ) complex. HJ DNA is sandwiched between 2 RuvA tetramers; dsDNA enters through RuvA and exits via RuvB. An RuvB hexamer assembles on each DNA strand where it exits the tetramer. Each RuvB hexamer is contacted by two RuvA subunits (via domain III) on 2 adjacent RuvB subunits; this complex drives branch migration. In the full resolvosome a probable DNA-RuvA(4)-RuvB(12)-RuvC(2) complex forms which resolves the HJ.

It localises to the cytoplasm. In terms of biological role, the RuvA-RuvB-RuvC complex processes Holliday junction (HJ) DNA during genetic recombination and DNA repair, while the RuvA-RuvB complex plays an important role in the rescue of blocked DNA replication forks via replication fork reversal (RFR). RuvA specifically binds to HJ cruciform DNA, conferring on it an open structure. The RuvB hexamer acts as an ATP-dependent pump, pulling dsDNA into and through the RuvAB complex. HJ branch migration allows RuvC to scan DNA until it finds its consensus sequence, where it cleaves and resolves the cruciform DNA. This Leuconostoc citreum (strain KM20) protein is Holliday junction branch migration complex subunit RuvA.